Here is a 428-residue protein sequence, read N- to C-terminus: Serine--tRNA ligase (428 aa).

235–237 (TAE) is a binding site for L-serine. Residue 266 to 268 (RSE) coordinates ATP. L-serine is bound at residue Glu-289. Residue 353 to 356 (EISS) participates in ATP binding. Ser-389 lines the L-serine pocket.

This sequence belongs to the class-II aminoacyl-tRNA synthetase family. Type-1 seryl-tRNA synthetase subfamily. As to quaternary structure, homodimer. The tRNA molecule binds across the dimer.

The protein localises to the cytoplasm. The enzyme catalyses tRNA(Ser) + L-serine + ATP = L-seryl-tRNA(Ser) + AMP + diphosphate + H(+). It carries out the reaction tRNA(Sec) + L-serine + ATP = L-seryl-tRNA(Sec) + AMP + diphosphate + H(+). The protein operates within aminoacyl-tRNA biosynthesis; selenocysteinyl-tRNA(Sec) biosynthesis; L-seryl-tRNA(Sec) from L-serine and tRNA(Sec): step 1/1. Functionally, catalyzes the attachment of serine to tRNA(Ser). Is also able to aminoacylate tRNA(Sec) with serine, to form the misacylated tRNA L-seryl-tRNA(Sec), which will be further converted into selenocysteinyl-tRNA(Sec). The polypeptide is Serine--tRNA ligase (Shewanella oneidensis (strain ATCC 700550 / JCM 31522 / CIP 106686 / LMG 19005 / NCIMB 14063 / MR-1)).